The sequence spans 318 residues: Methionyl-tRNA formyltransferase (318 aa).

112–115 (SILP) lines the (6S)-5,6,7,8-tetrahydrofolate pocket.

It belongs to the Fmt family.

It catalyses the reaction L-methionyl-tRNA(fMet) + (6R)-10-formyltetrahydrofolate = N-formyl-L-methionyl-tRNA(fMet) + (6S)-5,6,7,8-tetrahydrofolate + H(+). Attaches a formyl group to the free amino group of methionyl-tRNA(fMet). The formyl group appears to play a dual role in the initiator identity of N-formylmethionyl-tRNA by promoting its recognition by IF2 and preventing the misappropriation of this tRNA by the elongation apparatus. The sequence is that of Methionyl-tRNA formyltransferase from Shewanella sp. (strain W3-18-1).